The sequence spans 512 residues: Sucrose transport protein SUC2 (512 aa).

Residues methionine 1 to lysine 31 lie on the Cytoplasmic side of the membrane. Residues isoleucine 32–leucine 52 traverse the membrane as a helical segment. The Extracellular segment spans residues leucine 53–lysine 65. A helical transmembrane segment spans residues tryptophan 66–glycine 86. Residues tyrosine 87–arginine 100 are Cytoplasmic-facing. The chain crosses the membrane as a helical span at residues proline 101–alanine 121. Topologically, residues aspartate 122–arginine 138 are extracellular. The helical transmembrane segment at alanine 139–glycine 159 threads the bilayer. Residues proline 160 to arginine 177 are Cytoplasmic-facing. A helical membrane pass occupies residues threonine 178 to glycine 198. The Extracellular portion of the chain corresponds to serine 199–lysine 223. Residues threonine 224–valine 244 traverse the membrane as a helical segment. Residues lysine 245–proline 278 lie on the Cytoplasmic side of the membrane. The chain crosses the membrane as a helical span at residues methionine 279 to phenylalanine 299. At aspartate 300 to glycine 332 the chain is on the extracellular side. Residues alanine 333 to isoleucine 353 form a helical membrane-spanning segment. The Cytoplasmic portion of the chain corresponds to glycine 354–arginine 362. The helical transmembrane segment at leucine 363 to lysine 383 threads the bilayer. At glutamine 384 to alanine 407 the chain is on the extracellular side. N-linked (GlcNAc...) asparagine glycosylation is present at asparagine 402. The chain crosses the membrane as a helical span at residues leucine 408 to leucine 428. Topologically, residues alanine 429–glutamine 440 are cytoplasmic. Residues glycine 441 to glycine 461 form a helical membrane-spanning segment. Residues glycine 462–asparagine 473 are Extracellular-facing. Residues isoleucine 474–valine 494 form a helical membrane-spanning segment. Residues leucine 495–histidine 512 are Cytoplasmic-facing.

This sequence belongs to the glycoside-pentoside-hexuronide (GPH) cation symporter transporter (TC 2.A.2.4) family. In terms of assembly, homodimer. Interacts with SUC3 and SUC4. Expressed in leaves and, to a lower extent, in roots, flowers and stems. Highly specific to the phloem, exclusively localized in companion cells (at protein level).

The protein localises to the cell membrane. The enzyme catalyses sucrose(out) + H(+)(out) = sucrose(in) + H(+)(in). Its pathway is glycan biosynthesis; sucrose metabolism. Inhibited by protonophores (e.g. dinitrophenol and carbonyl cyanide m-chlorophenyl-hydrazone (CCCP)) and SH group inhibitors (e.g. N-ethylmaleimide (NEM) and p-chloromercuriphenyl sulphonic acid (PCMPS)). In terms of biological role, responsible for the transport of sucrose into the cell, with the concomitant uptake of protons (symport system). Can also transport other glucosides such as maltose, arbutin (hydroquinone-beta-D-glucoside), salicin (2-(hydroxymethyl)phenyl-beta-D-glucoside), alpha-phenylglucoside, beta-phenylglucoside, alpha-paranitrophenylglucoside, beta-paranitrophenylglucoside, and paranitrophenyl-beta-thioglucoside. May also transport biotin. Required for apoplastic phloem sucrose loading in source tissues (e.g. leaves) in order to transport it to sink tissues (e.g. roots, flowers). The chain is Sucrose transport protein SUC2 from Arabidopsis thaliana (Mouse-ear cress).